We begin with the raw amino-acid sequence, 153 residues long: Interleukin-2 (153 aa).

A signal peptide spans 1-20; the sequence is MYKVQLLSCIALTLALLTSS. T23 carries O-linked (GalNAc...) threonine glycosylation. C78 and C125 are disulfide-bonded. An N-linked (GlcNAc...) asparagine glycan is attached at N111.

This sequence belongs to the IL-2 family.

The protein localises to the secreted. Its function is as follows. Cytokine produced by activated CD4-positive helper T-cells and to a lesser extend activated CD8-positive T-cells and natural killer (NK) cells that plays pivotal roles in the immune response and tolerance. Binds to a receptor complex composed of either the high-affinity trimeric IL-2R (IL2RA/CD25, IL2RB/CD122 and IL2RG/CD132) or the low-affinity dimeric IL-2R (IL2RB and IL2RG). Interaction with the receptor leads to oligomerization and conformation changes in the IL-2R subunits resulting in downstream signaling starting with phosphorylation of JAK1 and JAK3. In turn, JAK1 and JAK3 phosphorylate the receptor to form a docking site leading to the phosphorylation of several substrates including STAT5. This process leads to activation of several pathways including STAT, phosphoinositide-3-kinase/PI3K and mitogen-activated protein kinase/MAPK pathways. Functions as a T-cell growth factor and can increase NK-cell cytolytic activity as well. Promotes strong proliferation of activated B-cells and subsequently immunoglobulin production. Plays a pivotal role in regulating the adaptive immune system by controlling the survival and proliferation of regulatory T-cells, which are required for the maintenance of immune tolerance. Moreover, participates in the differentiation and homeostasis of effector T-cell subsets, including Th1, Th2, Th17 as well as memory CD8-positive T-cells. In Oryctolagus cuniculus (Rabbit), this protein is Interleukin-2 (IL2).